The following is a 257-amino-acid chain: Uracil phosphoribosyltransferase homolog (257 aa).

GTP is bound by residues Arg-81, Arg-90, and 124–127; that span reads EKGN. Position 134 (Arg-134) interacts with 5-phospho-alpha-D-ribose 1-diphosphate. Positions 151 and 180 each coordinate GTP. 186 to 194 is a binding site for 5-phospho-alpha-D-ribose 1-diphosphate; the sequence is YPILSTGNT. 247-249 contributes to the uracil binding site; the sequence is THF.

Belongs to the UPRTase family.

The protein resides in the cytoplasm. Its subcellular location is the nucleus. In Danio rerio (Zebrafish), this protein is Uracil phosphoribosyltransferase homolog (uprt).